Here is a 601-residue protein sequence, read N- to C-terminus: ATP-dependent RNA helicase DeaD (601 aa).

Residues 6–34 (STFSFLGLNPFIIKSLSKMGYVKPSPIQA) carry the Q motif motif. The Helicase ATP-binding domain maps to 37–208 (IPLLLEGRDV…KRFMKNPQEI (172 aa)). ATP is bound at residue 50–57 (AQTGSGKT). Positions 156–159 (DEAD) match the DEAD box motif. Positions 231 to 378 (KTDALIRFLE…EVQLPKIEVL (148 aa)) constitute a Helicase C-terminal domain. Residues 564-581 (SIFNKDKNNKRRFSDNRL) show a composition bias toward basic and acidic residues. The tract at residues 564 to 601 (SIFNKDKNNKRRFSDNRLNKSSSIKNETKSSFFRRKSV) is disordered. Over residues 582–594 (NKSSSIKNETKSS) the composition is skewed to polar residues.

It belongs to the DEAD box helicase family. DeaD/CsdA subfamily.

It is found in the cytoplasm. It catalyses the reaction ATP + H2O = ADP + phosphate + H(+). Functionally, DEAD-box RNA helicase involved in various cellular processes at low temperature, including ribosome biogenesis, mRNA degradation and translation initiation. This is ATP-dependent RNA helicase DeaD from Buchnera aphidicola subsp. Schizaphis graminum (strain Sg).